Here is a 303-residue protein sequence, read N- to C-terminus: Coenzyme PQQ synthesis protein B (303 aa).

Belongs to the PqqB family.

It participates in cofactor biosynthesis; pyrroloquinoline quinone biosynthesis. Its function is as follows. May be involved in the transport of PQQ or its precursor to the periplasm. This Acinetobacter baumannii (strain ACICU) protein is Coenzyme PQQ synthesis protein B.